A 173-amino-acid polypeptide reads, in one-letter code: Calcium-binding protein 5 (173 aa).

4 consecutive EF-hand domains span residues 28-63 (DELD…MGYM), 82-99 (GRVD…KLLA), 105-140 (IGVQ…LLGE), and 142-173 (LTPR…MMSR). Residues Asp41, Asp43, Asp45, and Asp52 each coordinate Ca(2+). Ca(2+)-binding residues include Asp118, Asn120, Asp122, Glu124, Glu129, Asp155, Asn157, Asp159, Thr161, and Glu166.

In terms of assembly, interacts with CACNA1C (via C-terminal CDB motif) in a calcium-dependent manner. Interacts with STXBP1. Interacts with MYO6. As to expression, expressed in inner and outer plexiform layers of the retina, and retinal bipolar cells (at protein level). Expressed in the inner hair cells (IHC) of the cochlea.

It localises to the cytoplasm. Its function is as follows. Inhibits calcium-dependent inactivation of L-type calcium channel and shifts voltage dependence of activation to more depolarized membrane potentials. Involved in the transmission of light signals. May positively regulate neurotransmitter vesicle endocytosis and exocytosis in a salt-dependent manner. May play a role in the extension and network organization of neurites. In Mus musculus (Mouse), this protein is Calcium-binding protein 5 (Cabp5).